The sequence spans 708 residues: Exocyst complex component 5 (708 aa).

Residue Ala2 is modified to N-acetylalanine. The stretch at 40-101 forms a coiled coil; the sequence is KRLLEEFVNH…AFQHFQELDE (62 aa). Thr122, Thr395, and Thr405 each carry phosphothreonine. The residue at position 412 (Ser412) is a Phosphoserine.

Belongs to the SEC10 family. The exocyst complex is composed of EXOC1, EXOC2, EXOC3, EXOC4, EXOC5, EXOC6, EXOC7 and EXOC8. Interacts with EXOC3L1. Ubiquitous.

It localises to the cytoplasm. Its subcellular location is the midbody. Functionally, component of the exocyst complex involved in the docking of exocytic vesicles with fusion sites on the plasma membrane. The chain is Exocyst complex component 5 (Exoc5) from Rattus norvegicus (Rat).